Consider the following 202-residue polypeptide: Ribosomal RNA small subunit methyltransferase G (202 aa).

Residues Gly-75, Phe-80, 125–126 (VQ), and Arg-139 each bind S-adenosyl-L-methionine.

This sequence belongs to the methyltransferase superfamily. RNA methyltransferase RsmG family.

It localises to the cytoplasm. Functionally, specifically methylates the N7 position of a guanine in 16S rRNA. This chain is Ribosomal RNA small subunit methyltransferase G, found in Mesomycoplasma hyopneumoniae (strain J / ATCC 25934 / NCTC 10110) (Mycoplasma hyopneumoniae).